Here is a 305-residue protein sequence, read N- to C-terminus: Phosphopantetheine adenylyltransferase (305 aa).

It belongs to the eukaryotic CoaD family.

It localises to the cytoplasm. The protein resides in the nucleus. It catalyses the reaction (R)-4'-phosphopantetheine + ATP + H(+) = 3'-dephospho-CoA + diphosphate. Functionally, reversibly transfers an adenylyl group from ATP to 4'-phosphopantetheine, yielding dephospho-CoA (dPCoA) and pyrophosphate. Plays a role in the physiological regulation of the intracellular CoA concentration. The polypeptide is Phosphopantetheine adenylyltransferase (CAB4) (Saccharomyces cerevisiae (strain ATCC 204508 / S288c) (Baker's yeast)).